The following is a 447-amino-acid chain: UPF0597 protein Amet_4665 (447 aa).

This sequence belongs to the UPF0597 family.

This chain is UPF0597 protein Amet_4665, found in Alkaliphilus metalliredigens (strain QYMF).